Reading from the N-terminus, the 444-residue chain is Trigger factor (444 aa).

A PPIase FKBP-type domain is found at D160–P245.

This sequence belongs to the FKBP-type PPIase family. Tig subfamily.

The protein localises to the cytoplasm. It catalyses the reaction [protein]-peptidylproline (omega=180) = [protein]-peptidylproline (omega=0). Involved in protein export. Acts as a chaperone by maintaining the newly synthesized protein in an open conformation. Functions as a peptidyl-prolyl cis-trans isomerase. This Acinetobacter baylyi (strain ATCC 33305 / BD413 / ADP1) protein is Trigger factor.